Reading from the N-terminus, the 120-residue chain is Secreted RxLR effector protein RXLR-C26 (120 aa).

The N-terminal stretch at 1-29 is a signal peptide; the sequence is MTGILCFPPFARFFMLLSGCAWLAGVSSG. A RxLR-dEER motif is present at residues 57–77; it reads RNLRGHINSAIIEANDTSEER. N-linked (GlcNAc...) asparagine glycosylation occurs at Asn-71.

It belongs to the RxLR effector family.

The protein resides in the secreted. It localises to the host cytoplasm. Its subcellular location is the host nucleus. Its function is as follows. Secreted effector that does not suppress pattern-triggered immunity (PTI) in plant host. This chain is Secreted RxLR effector protein RXLR-C26, found in Plasmopara halstedii (Downy mildew of sunflower).